Reading from the N-terminus, the 152-residue chain is Ubiquitin-conjugating enzyme E2 N (152 aa).

The 147-residue stretch at Gly-3–Met-149 folds into the UBC core domain. At Lys-82 the chain carries N6-acetyllysine. The active-site Glycyl thioester intermediate is the Cys-87. A Glycyl lysine isopeptide (Lys-Gly) (interchain with G-Cter in ISG15) cross-link involves residue Lys-92.

This sequence belongs to the ubiquitin-conjugating enzyme family. Heterodimer with UBE2V2. Interacts (UBE2V2-UBE2N heterodimer) with the E3 ligase STUB1 (via the U-box domain); the complex has a specific 'Lys-63'-linked polyubiquitination activity. Interacts with RNF8 and RNF168. Interacts with RNF11. Interacts with the E3 ligases, HLTF and SHPRH; the interactions promote the 'Lys-63'-linked polyubiquitination of PCNA upon genotoxic stress and lead to DNA repair. Interacts with ARIH2 (via RING-type 2). Interacts with OTUB1; leading to inhibit E2-conjugating activity. Interacts with RIGI and RNF135; involved in RIGI ubiquitination and activation. In terms of processing, conjugation to ISG15 impairs formation of the thioester bond with ubiquitin but not interaction with UBE2V2.

It catalyses the reaction S-ubiquitinyl-[E1 ubiquitin-activating enzyme]-L-cysteine + [E2 ubiquitin-conjugating enzyme]-L-cysteine = [E1 ubiquitin-activating enzyme]-L-cysteine + S-ubiquitinyl-[E2 ubiquitin-conjugating enzyme]-L-cysteine.. It participates in protein modification; protein ubiquitination. Its activity is regulated as follows. Activity is inhibited by binding to OTUB1, which prevents 'Lys-63'-linked polyubiquitination. Functionally, the UBE2V1-UBE2N and UBE2V2-UBE2N heterodimers catalyze the synthesis of non-canonical 'Lys-63'-linked polyubiquitin chains. This type of polyubiquitination does not lead to protein degradation by the proteasome. Mediates transcriptional activation of target genes. Plays a role in the control of progress through the cell cycle and differentiation. Plays a role in the error-free DNA repair pathway and contributes to the survival of cells after DNA damage. Acts together with the E3 ligases, HLTF and SHPRH, in the 'Lys-63'-linked poly-ubiquitination of PCNA upon genotoxic stress, which is required for DNA repair. Appears to act together with E3 ligase RNF5 in the 'Lys-63'-linked polyubiquitination of JKAMP thereby regulating JKAMP function by decreasing its association with components of the proteasome and ERAD. Promotes TRIM5 capsid-specific restriction activity and the UBE2V1-UBE2N heterodimer acts in concert with TRIM5 to generate 'Lys-63'-linked polyubiquitin chains which activate the MAP3K7/TAK1 complex which in turn results in the induction and expression of NF-kappa-B and MAPK-responsive inflammatory genes. Together with RNF135 and UB2V1, catalyzes the viral RNA-dependent 'Lys-63'-linked polyubiquitination of RIGI to activate the downstream signaling pathway that leads to interferon beta production. UBE2V1-UBE2N together with TRAF3IP2 E3 ubiquitin ligase mediate 'Lys-63'-linked polyubiquitination of TRAF6, a component of IL17A-mediated signaling pathway. This chain is Ubiquitin-conjugating enzyme E2 N (UBE2N), found in Macaca fascicularis (Crab-eating macaque).